A 352-amino-acid polypeptide reads, in one-letter code: Iron-sulfur cluster carrier protein (352 aa).

Residue 114 to 121 participates in ATP binding; it reads GKGGVGKS.

This sequence belongs to the Mrp/NBP35 ATP-binding proteins family. In terms of assembly, homodimer. Interacts with BrxC.

Functionally, binds and transfers iron-sulfur (Fe-S) clusters to target apoproteins. Can hydrolyze ATP. Negatively regulates the expression of hpr/scoC. The effect on hpr/scoC may be indirect. This Bacillus subtilis (strain 168) protein is Iron-sulfur cluster carrier protein (salA).